Reading from the N-terminus, the 1097-residue chain is Apolipoprotein B receptor (1097 aa).

Disordered regions lie at residues 64 to 249 (QEDL…KGEE), 262 to 376 (AWGT…WTTS), 410 to 739 (EEEG…SRRG), 789 to 866 (GWDS…ARAE), and 889 to 1097 (VGWQ…PKPQ). 3 stretches are compositionally biased toward basic and acidic residues: residues 83–92 (GPGDDRRHEV), 158–177 (ERQE…RSWE), and 185–208 (VRAR…ETEG). The span at 209–218 (KAGAVGPKAA) shows a compositional bias: low complexity. Basic and acidic residues-rich tracts occupy residues 219–232 (GDNR…READ) and 279–302 (GREE…EEAR). The span at 312–330 (TASGGEEAETASGGEEAGT) shows a compositional bias: low complexity. The segment covering 331 to 362 (ASGGEEAGIASGGEAGTASGGEEAGTASGGEE) has biased composition (gly residues). Position 458 is a phosphoserine (Ser458). Basic and acidic residues-rich tracts occupy residues 463 to 487 (VDLR…RMEE) and 496 to 505 (EERGSSRDPV). Position 510 is a phosphoserine (Ser510). Residue Thr572 is modified to Phosphothreonine. Phosphoserine is present on Ser594. Basic and acidic residues-rich tracts occupy residues 594 to 606 (SKEE…EAGP) and 626 to 637 (NRTRKDMERGNT). Over residues 640–652 (DAADGEQREEEET) the composition is skewed to acidic residues. 3 stretches are compositionally biased toward basic and acidic residues: residues 791-800 (DSKEKEEAAA), 892-918 (QERE…RLLD), and 928-950 (RRAE…EEQP). The span at 1000-1017 (SRVHLSRSSSQRRSRPSF) shows a compositional bias: basic residues. The span at 1041 to 1050 (APEQRPLQLE) shows a compositional bias: low complexity.

In terms of assembly, homodimer. There are 2 forms in macrophages, the membrane-binding proteins 200 kDa (MBP 200) and 235 kDa (MBP 235), that can be reduced into a single active ligand-binding species with intermediate mobility (MBP 200R). In terms of tissue distribution, expressed in peripheral blood leukocytes &gt; bone marrow = spleen &gt; lymph node, and only faintly visible in appendix and thymus. Expressed in the brain, heart, kidney, liver, lung, pancreas, and placenta. Expressed primarily by reticuloendothelial cells: monocytes, macrophages, and endothelial cells. Expressed in atherosclerotic lesion foam cells.

Its subcellular location is the cell membrane. Functionally, macrophage receptor that binds to the apolipoprotein B48 (APOB) of dietary triglyceride (TG)-rich lipoproteins (TRL) or to a like domain of APOB in hypertriglyceridemic very low density lipoprotein (HTG-VLDL). Binds and internalizes TRL when out of the context of the macrophage. May provide essential lipids to reticuloendothelial cells. Could also be involved in foam cell formation with elevated TRL and remnant lipoprotein (RLP). Mediates the rapid high-affinity uptake of chylomicrons (CM), HTG-VLDL, and trypsinized (tryp) VLDL devoid of APOE in vitro in macrophages. The chain is Apolipoprotein B receptor from Homo sapiens (Human).